A 261-amino-acid chain; its full sequence is MNFLWKGRRFLIAGILPTFEGAADEIVDKENKTYKAFLASKPPEETGLERLKQMFTIDEFGSISSELNSVYQAGFLGFLIGAIYGGVTQSRVAYMNFMENNQATAFKSHFDAKKKLQDQFTVNFAKGGFKWGWRVGLFTTSYFGIITCMSVYRGKSSIYEYLAAGSITGSLYKVSLGLRGMAAGGIIGGFLGGVAGVTSLLLMKASGTSMEEVRYWQYKWRLDRDENIQQAFKKLTEDENPELFKAHDEKTSEHVSLDTIK.

The next 3 helical transmembrane spans lie at Leu-67–Val-87, Trp-131–Val-151, and Ala-183–Met-203.

The protein belongs to the Tim17/Tim22/Tim23 family. In terms of assembly, associates with complex I assembly intermediates during its biogenesis in a NdufAF3 and NdufAF4 dependent manner.

It localises to the membrane. In terms of biological role, chaperone protein involved in the assembly of the mitochondrial NADH:ubiquinone oxidoreductase complex (complex I). Essential for viability. The chain is Complex I assembly factor TIMMDC1, mitochondrial from Drosophila melanogaster (Fruit fly).